The following is a 457-amino-acid chain: MEEQARPPGRPAASATLQGSAHPGGAASTATAAALSFSSVATVTLGNQSDAGRPEAAGSRGPAPLLWHGAAVAAQALVLLLIFLLSSLGNCAVMGVIVKHRQLRTVTNAFILSLSLSDLLTALLCLPAAFLDLFAPPGDSGPWRSFCAASRFFSSCFGIVSTFSVALISLDRYCAIVRPPRDKLGRRRALQLLAGAWLAALGFSLPWDLLRAPREPPAPQSFHRCLYRTSPDPAQLGVAYSVGLVVACYLLPFLLMCFCRYHICKTVRLSDVRVRPMTTYARVLRFFSEVRTATTVLIMIIFVMCCWGPYCFLVLLAATRQGQATQAPSLLNVAAVWLTWANGAINPVIYAIRNPNISMLLGRNREEGYRTRNMDAFLPSQGLGFQARSRNRLRNGCANRLGACSRMPSSNPASGSGGEVVMWARKNPVVLFFREGPPDSVMEVGKLHNSETRDSSI.

The segment at 1–26 (MEEQARPPGRPAASATLQGSAHPGGA) is disordered. Over 1 to 64 (MEEQARPPGR…EAAGSRGPAP (64 aa)) the chain is Extracellular. N47 carries an N-linked (GlcNAc...) asparagine glycan. The helical transmembrane segment at 65–85 (LLWHGAAVAAQALVLLLIFLL) threads the bilayer. The Cytoplasmic portion of the chain corresponds to 86–109 (SSLGNCAVMGVIVKHRQLRTVTNA). Residues 110–130 (FILSLSLSDLLTALLCLPAAF) traverse the membrane as a helical segment. At 131–156 (LDLFAPPGDSGPWRSFCAASRFFSSC) the chain is on the extracellular side. A helical transmembrane segment spans residues 157-177 (FGIVSTFSVALISLDRYCAIV). The Cytoplasmic portion of the chain corresponds to 178-189 (RPPRDKLGRRRA). The chain crosses the membrane as a helical span at residues 190–210 (LQLLAGAWLAALGFSLPWDLL). Topologically, residues 211 to 235 (RAPREPPAPQSFHRCLYRTSPDPAQ) are extracellular. A helical membrane pass occupies residues 236–256 (LGVAYSVGLVVACYLLPFLLM). At 257–295 (CFCRYHICKTVRLSDVRVRPMTTYARVLRFFSEVRTATT) the chain is on the cytoplasmic side. A helical transmembrane segment spans residues 296 to 316 (VLIMIIFVMCCWGPYCFLVLL). The Extracellular portion of the chain corresponds to 317-329 (AATRQGQATQAPS). The helical transmembrane segment at 330–350 (LLNVAAVWLTWANGAINPVIY) threads the bilayer. Topologically, residues 351–457 (AIRNPNISML…HNSETRDSSI (107 aa)) are cytoplasmic.

Belongs to the G-protein coupled receptor 1 family. As to quaternary structure, interacts with MTNR1B. Interacts with ARRB1 and ARRB2 in a spontaneous and agonist-independent manner; leading to the internalization of GPR135 in the endosomal compartment.

Its subcellular location is the cell membrane. It is found in the endosome membrane. Orphan receptor. Has spontaneous activity for beta-arrestin recruitment. Shows a reciprocal regulatory interaction with the melatonin receptor MTNR1B most likely through receptor heteromerization. The polypeptide is G-protein coupled receptor 135 (Gpr135) (Mus musculus (Mouse)).